The chain runs to 358 residues: Trace amine-associated receptor 7a (358 aa).

Over 1 to 47 (MDKLVDHFLSDQSRTMNEDLFSATSTELCYENLNRSCVRSPYSPGPR) the chain is Extracellular. The N-linked (GlcNAc...) asparagine glycan is linked to N34. 2 cysteine pairs are disulfide-bonded: C37/C201 and C120/C205. A helical transmembrane segment spans residues 48-68 (LILYAVFGFGAALAVCGNLLV). The Cytoplasmic segment spans residues 69-83 (MTSILHFRQLHSPAN). Residues 84–104 (FLVASLACADFLVGLTVMPFS) traverse the membrane as a helical segment. At 105–121 (TVRSVEGCWYFGESYCK) the chain is on the extracellular side. A helical membrane pass occupies residues 122-143 (FHSCFEGSFCYSSIFHLCFISV). The Cytoplasmic segment spans residues 144–166 (DRYIAVSDPLTYPTRFTASVSGK). A helical transmembrane segment spans residues 167-187 (CITFSWLLSIIYSFSLLYTGA). Over 188-212 (NEAGLEDLVSVLTCVGGCQIAVNQS) the chain is Extracellular. N210 is a glycosylation site (N-linked (GlcNAc...) asparagine). The helical transmembrane segment at 213 to 233 (WVFINFLLFLIPTLVMMTVYS) threads the bilayer. Topologically, residues 234–274 (KIFLIAKQQAQNIEKMSKQTARASESYKDRVAKRERKAAKT) are cytoplasmic. A helical membrane pass occupies residues 275 to 295 (LGIAVAAFLLSWLPYFIDSII). At 296–309 (DAFLGFITPTYVYE) the chain is on the extracellular side. The chain crosses the membrane as a helical span at residues 310-333 (ILVWIAYYNSAMNPLIYAFFYPWF). Topologically, residues 334-358 (RKAIKLIVTGKILRENSSTTNLFPE) are cytoplasmic.

Belongs to the G-protein coupled receptor 1 family. In terms of tissue distribution, specifically expressed in neurons of the olfactory epithelium.

The protein localises to the cell membrane. In terms of biological role, olfactory receptor specific for N,N-dimethylalkylamines trace amines. Trace amine compounds are enriched in animal body fluids and act on trace amine-associated receptors (TAARs) to elicit both intraspecific and interspecific innate behaviors. Ligand-binding causes a conformation change that triggers signaling via G(s)-class of G alpha proteins (GNAL or GNAS). This Mus musculus (Mouse) protein is Trace amine-associated receptor 7a.